Reading from the N-terminus, the 413-residue chain is MAEGEDGSWWRSWLQQSYTSVRDKSAETLEFMKRDLTEFSRVVHHDTACTIAATASVVKEKLVVEGSSGTTEKVKKGLSDFLGVISDTFAPSPDKTIDCDVITLMATPSGTTELYDGTKARLYSLQSDPATYCNEPDGFPAEFDAWLAYWDPEQRKAEISELLVTSPSIRALFTKMVPAAVSHSEFWQRYFYKVHQLEQEEARRDALKQRADQSVHSEEPTWEEEEEDFVGAGSAPALKLEEKYVLSTPTIPTLHVEDKSEKTAELNRDHTSFTSPSESSESISPITQIANPEYIEQTPSKEPSPGTLTVTKENTGAGTDETSAPAPLEQKTGKSNTQMATQREDPPSDLRVFELNSDSGKSTPSNNGQKGSSTDISEDWEKEFDMTEEEVQLALSTVEVSGEVEDEDWENWE.

Positions W146–E198 constitute a BSD domain. 2 stretches are compositionally biased toward basic and acidic residues: residues K208–E219 and H255–T271. 2 disordered regions span residues K208–D228 and H255–M386. Over residues T274–T287 the composition is skewed to low complexity. The span at Q297–T322 shows a compositional bias: polar residues. The span at Q342–V352 shows a compositional bias: basic and acidic residues. The span at N356–D375 shows a compositional bias: polar residues. Acidic residues predominate over residues I376–M386.

The sequence is that of BSD domain-containing protein 1-A (bsdc1-a) from Xenopus laevis (African clawed frog).